We begin with the raw amino-acid sequence, 124 residues long: Small ribosomal subunit protein uS12 (124 aa).

Residues Met-1–Ala-23 form a disordered region. Asp-89 is subject to 3-methylthioaspartic acid.

It belongs to the universal ribosomal protein uS12 family. Part of the 30S ribosomal subunit. Contacts proteins S8 and S17. May interact with IF1 in the 30S initiation complex.

With S4 and S5 plays an important role in translational accuracy. Its function is as follows. Interacts with and stabilizes bases of the 16S rRNA that are involved in tRNA selection in the A site and with the mRNA backbone. Located at the interface of the 30S and 50S subunits, it traverses the body of the 30S subunit contacting proteins on the other side and probably holding the rRNA structure together. The combined cluster of proteins S8, S12 and S17 appears to hold together the shoulder and platform of the 30S subunit. The polypeptide is Small ribosomal subunit protein uS12 (Pseudoalteromonas translucida (strain TAC 125)).